The sequence spans 301 residues: LHMIHLHWYQYPPMNPMMYPLLLIFMLFTGILCLAGNFVTIWVFMNTKSLRTPANLLVVNLAMSDFLMMFTMFPPMMVTCYYHTWTLGPTFCQVYGFLGNLCGCASIWTMVFITFDRYNVIVKGVAGEPLSTKKASLWILIVWVLSLAWCMAPFFGWNRYVPEGNLTGCGTDYLSEDILSRSYLYIYSTWVYFLPLTITIYCYVFIIKAVAAHEKGMRDQAKKMGIKSLRNEEAQKTSAECRLAKIAMTTVALWFIAWTPYLLINWVGMFARSYLSPVYTIWGYVFAKANAVYNPIVYAIS.

Topologically, residues 1-18 are extracellular; the sequence is LHMIHLHWYQYPPMNPMM. The helical transmembrane segment at 19–43 threads the bilayer; that stretch reads YPLLLIFMLFTGILCLAGNFVTIWV. Residues 44-55 are Cytoplasmic-facing; sequence FMNTKSLRTPAN. A helical membrane pass occupies residues 56-78; that stretch reads LLVVNLAMSDFLMMFTMFPPMMV. The Extracellular segment spans residues 79 to 92; the sequence is TCYYHTWTLGPTFC. A disulfide bridge connects residues C92 and C169. A helical transmembrane segment spans residues 93–115; that stretch reads QVYGFLGNLCGCASIWTMVFITF. A 'Ionic lock' involved in activated form stabilization motif is present at residues 116 to 118; that stretch reads DRY. Over 116 to 134 the chain is Cytoplasmic; it reads DRYNVIVKGVAGEPLSTKK. A helical transmembrane segment spans residues 135-155; that stretch reads ASLWILIVWVLSLAWCMAPFF. At 156–182 the chain is on the extracellular side; the sequence is GWNRYVPEGNLTGCGTDYLSEDILSRS. The N-linked (GlcNAc...) asparagine glycan is linked to N165. A helical membrane pass occupies residues 183 to 204; the sequence is YLYIYSTWVYFLPLTITIYCYV. At 205–245 the chain is on the cytoplasmic side; sequence FIIKAVAAHEKGMRDQAKKMGIKSLRNEEAQKTSAECRLAK. Residues 246 to 267 form a helical membrane-spanning segment; sequence IAMTTVALWFIAWTPYLLINWV. The Extracellular segment spans residues 268 to 278; the sequence is GMFARSYLSPV. A helical transmembrane segment spans residues 279–300; it reads YTIWGYVFAKANAVYNPIVYAI. At K288 the chain carries N6-(retinylidene)lysine.

Belongs to the G-protein coupled receptor 1 family. Opsin subfamily. In terms of assembly, homodimer. Interacts with GNAQ. Post-translationally, contains one covalently linked retinal chromophore.

It localises to the cell projection. Its subcellular location is the rhabdomere membrane. Its function is as follows. Photoreceptor required for image-forming vision at low light intensity. Can use both retinal and 3-dehydroretinal as visual pigment. Light-induced isomerization of 11-cis to all-trans retinal triggers a conformational change that activates signaling via G-proteins. Signaling via GNAQ probably mediates the activation of phospholipase C. In Procambarus milleri (Miami cave crayfish), this protein is Rhodopsin (RHO).